The sequence spans 507 residues: ATP synthase subunit alpha, chloroplastic (507 aa).

170–177 (GDRQTGKT) contacts ATP.

It belongs to the ATPase alpha/beta chains family. F-type ATPases have 2 components, CF(1) - the catalytic core - and CF(0) - the membrane proton channel. CF(1) has five subunits: alpha(3), beta(3), gamma(1), delta(1), epsilon(1). CF(0) has four main subunits: a, b, b' and c.

It localises to the plastid. Its subcellular location is the chloroplast thylakoid membrane. It carries out the reaction ATP + H2O + 4 H(+)(in) = ADP + phosphate + 5 H(+)(out). Produces ATP from ADP in the presence of a proton gradient across the membrane. The alpha chain is a regulatory subunit. The protein is ATP synthase subunit alpha, chloroplastic of Dioscorea elephantipes (Elephant's foot yam).